The sequence spans 65 residues: Large ribosomal subunit protein bL35 (65 aa).

This sequence belongs to the bacterial ribosomal protein bL35 family.

The chain is Large ribosomal subunit protein bL35 from Aeromonas hydrophila subsp. hydrophila (strain ATCC 7966 / DSM 30187 / BCRC 13018 / CCUG 14551 / JCM 1027 / KCTC 2358 / NCIMB 9240 / NCTC 8049).